We begin with the raw amino-acid sequence, 380 residues long: Aprataxin (380 aa).

An FHA-like domain is found at 36-85 (PVIIGRTPELGITDKLCSRSQLELTSNCYKRYVLVKRLGANTSQINGIDI). The segment at 176-207 (VYAFDSPSPMSSRCEKKAESNKRAPTHKHWSQ) is disordered. Over residues 188–197 (RCEKKAESNK) the composition is skewed to basic and acidic residues. An HIT domain is found at 206–312 (SQGLKASMED…ISQDFQSSSF (107 aa)). Interaction with DNA substrate regions lie at residues 231–235 (DKYPK) and 294–295 (SM). The Histidine triad motif signature appears at 297–301 (QMHMH). Residue H299 is the Tele-AMP-histidine intermediate of the active site. The C2H2-type; atypical zinc finger occupies 356–378 (LKCHRCKKPQKNIPTLKKHIDSC).

It localises to the nucleus. Its subcellular location is the nucleoplasm. The protein localises to the nucleolus. The enzyme catalyses a 5'-end adenosine-5'-diphospho-5'-2'-deoxyribonucleoside-DNA + H2O = a 5'-end 5'-phospho-2'-deoxyribonucleoside-DNA + AMP + 2 H(+). It carries out the reaction a 5'-end adenosine-5'-diphospho-5'-ribonucleoside-2'-deoxyribonucleotide-DNA + H2O = a 5'-end 5'-phospho-ribonucleoside-2'-deoxyribonucleotide-DNA + AMP + 2 H(+). The catalysed reaction is a 3'-end 2'-deoxyribonucleotide-3'-diphospho-5'-guanosine-DNA + H2O = a 3'-end 2'-deoxyribonucleotide 3'-phosphate-DNA + GMP + 2 H(+). In terms of biological role, DNA-binding protein involved in single-strand DNA break repair, double-strand DNA break repair and base excision repair. Resolves abortive DNA ligation intermediates formed either at base excision sites, or when DNA ligases attempt to repair non-ligatable breaks induced by reactive oxygen species. Catalyzes the release of adenylate groups covalently linked to 5'-phosphate termini, resulting in the production of 5'-phosphate termini that can be efficiently rejoined. Also able to hydrolyze adenosine 5'-monophosphoramidate (AMP-NH(2)) and diadenosine tetraphosphate (AppppA), but with lower catalytic activity. Likewise, catalyzes the release of 3'-linked guanosine (DNAppG) and inosine (DNAppI) from DNA, but has higher specific activity with 5'-linked adenosine (AppDNA). The protein is Aprataxin (APTX) of Ciona intestinalis (Transparent sea squirt).